The sequence spans 259 residues: Probable transcriptional regulatory protein Noca_2383 (259 aa).

Belongs to the TACO1 family.

The protein resides in the cytoplasm. The polypeptide is Probable transcriptional regulatory protein Noca_2383 (Nocardioides sp. (strain ATCC BAA-499 / JS614)).